The following is a 362-amino-acid chain: Heat-inducible transcription repressor HrcA (362 aa).

It belongs to the HrcA family.

Its function is as follows. Negative regulator of class I heat shock genes (grpE-dnaK-dnaJ and groELS operons). Prevents heat-shock induction of these operons. The polypeptide is Heat-inducible transcription repressor HrcA (Bradyrhizobium diazoefficiens (strain JCM 10833 / BCRC 13528 / IAM 13628 / NBRC 14792 / USDA 110)).